The chain runs to 339 residues: Undifferentiated embryonic cell transcription factor 1 (339 aa).

Disordered stretches follow at residues 1–62 and 144–270; these read MLLR…QRTP and MGLL…QVAP. 4 positions are modified to phosphoserine: Ser15, Ser18, Ser48, and Ser54. The span at 154-170 shows a compositional bias: basic residues; it reads RVRRRSTGPGRPQRRGR. 2 stretches are compositionally biased toward low complexity: residues 171–193 and 218–229; these read SSLS…PLAA and TSSPPLTSTDTL. The segment covering 261–270 has biased composition (polar residues); the sequence is GRASSPQVAP. Residues 279–310 form a leucine-zipper region; that stretch reads QTLTHLGDISTVLGPLRDQLSTLNQHVEHLRG.

In terms of assembly, binds to the N-terminal region of ATF2. Associates with the TFIID complex through interaction with TBP. Phosphorylated. Expressed mainly in pluripotent cells with expression rapidly down-regulated upon cell differentiation.

It localises to the nucleus. Acts as a transcriptional coactivator of ATF2. This Mus musculus (Mouse) protein is Undifferentiated embryonic cell transcription factor 1.